The sequence spans 426 residues: MKLKSRFTSIIGVITLFFSQTVTAESDVVISVDEGVSMAQPIAVVPFKANGGVPADVGQIIADDLRNSGKFTPVERSKLPAQPGSAAEVNSQQWTDIGVDSVVVGQVTPTGGGYNVAYQLVDTLSNPATVLAQGAFNVPAAQIRQGAHTVSDQVFEKITQIRGAFRTKIAYVVQRGVSSYELRVSDYDGYNAFTVVKSKEPLMSPEWSPDGSRLAYVTFENKKAQVVVHDLRSGSRRVVAALRGHNGAPAFSPDGSRIAFASNQDGELDIYVVGANGGKPSKLTANAGNNTEPSWSPDGSTIYFTSDRAGSPQVYRMGSSGGGASPMGGSGSYNAKVSSDGKNLIMIAGDKVVKRDLASGGTEVLSSTFLDESPSISPNGIMVIYSSTKGTSKVLQLVSADGRFKANLPGAGGQFKFPAWSPYLTK.

Positions 1-24 (MKLKSRFTSIIGVITLFFSQTVTA) are cleaved as a signal peptide.

The protein belongs to the TolB family. In terms of assembly, the Tol-Pal system is composed of five core proteins: the inner membrane proteins TolA, TolQ and TolR, the periplasmic protein TolB and the outer membrane protein Pal. They form a network linking the inner and outer membranes and the peptidoglycan layer.

Its subcellular location is the periplasm. Part of the Tol-Pal system, which plays a role in outer membrane invagination during cell division and is important for maintaining outer membrane integrity. This chain is Tol-Pal system protein TolB, found in Actinobacillus pleuropneumoniae serotype 5b (strain L20).